The chain runs to 110 residues: UPF0339 protein PA0329 (110 aa).

Repeat copies occupy residues 10–58 and 61–109. The segment at 91-110 is disordered; sequence EAGVQSVKRATPEAGLSDES.

The protein belongs to the UPF0339 family. Duplicated subfamily.

The sequence is that of UPF0339 protein PA0329 from Pseudomonas aeruginosa (strain ATCC 15692 / DSM 22644 / CIP 104116 / JCM 14847 / LMG 12228 / 1C / PRS 101 / PAO1).